The sequence spans 237 residues: Phosphoribosylaminoimidazole-succinocarboxamide synthase (237 aa).

The protein belongs to the SAICAR synthetase family.

The enzyme catalyses 5-amino-1-(5-phospho-D-ribosyl)imidazole-4-carboxylate + L-aspartate + ATP = (2S)-2-[5-amino-1-(5-phospho-beta-D-ribosyl)imidazole-4-carboxamido]succinate + ADP + phosphate + 2 H(+). The protein operates within purine metabolism; IMP biosynthesis via de novo pathway; 5-amino-1-(5-phospho-D-ribosyl)imidazole-4-carboxamide from 5-amino-1-(5-phospho-D-ribosyl)imidazole-4-carboxylate: step 1/2. The polypeptide is Phosphoribosylaminoimidazole-succinocarboxamide synthase (Marinobacter nauticus (strain ATCC 700491 / DSM 11845 / VT8) (Marinobacter aquaeolei)).